The sequence spans 176 residues: ATP-dependent protease subunit HslV (176 aa).

T2 is a catalytic residue. 3 residues coordinate Na(+): G157, C160, and T163.

It belongs to the peptidase T1B family. HslV subfamily. A double ring-shaped homohexamer of HslV is capped on each side by a ring-shaped HslU homohexamer. The assembly of the HslU/HslV complex is dependent on binding of ATP.

Its subcellular location is the cytoplasm. The catalysed reaction is ATP-dependent cleavage of peptide bonds with broad specificity.. Its activity is regulated as follows. Allosterically activated by HslU binding. Its function is as follows. Protease subunit of a proteasome-like degradation complex believed to be a general protein degrading machinery. In Pseudomonas fluorescens (strain SBW25), this protein is ATP-dependent protease subunit HslV.